Consider the following 240-residue polypeptide: Putative exosome complex component RRP41 (240 aa).

Belongs to the RNase PH family. In terms of assembly, component of the RNA exosome complex.

Its subcellular location is the cytoplasm. It is found in the nucleus. The protein localises to the nucleolus. It localises to the nucleoplasm. Its function is as follows. Non-catalytic component of the RNA exosome complex which has 3'-&gt;5' exoribonuclease activity and participates in a multitude of cellular RNA processing and degradation events. The sequence is that of Putative exosome complex component RRP41 (exos-4.1) from Caenorhabditis briggsae.